A 396-amino-acid polypeptide reads, in one-letter code: Nitrate regulatory protein (396 aa).

Positions 37 to 284 (GQISALVHML…VDLLNAADAL (248 aa)) constitute an NIT domain. Positions 323 to 384 (LQQLSGQLAS…RMVEIARALL (62 aa)) constitute an ANTAR domain.

Functionally, nitrate- and nitrite-responsive positive regulator for nasFEDCBA operon expression. NasR protein binds to the factor-independent terminator site located in the nasF operon leader RNA to effect transcription antitermination. This Klebsiella oxytoca protein is Nitrate regulatory protein (nasR).